Here is a 467-residue protein sequence, read N- to C-terminus: Cysteine--tRNA ligase (467 aa).

Cys-27 lines the Zn(2+) pocket. The short motif at 29–39 (PTVYNYIHIGN) is the 'HIGH' region element. Zn(2+) contacts are provided by Cys-207, His-232, and Glu-236. The short motif at 264 to 268 (KMSKS) is the 'KMSKS' region element. Lys-267 contacts ATP.

This sequence belongs to the class-I aminoacyl-tRNA synthetase family. Monomer. Requires Zn(2+) as cofactor.

It is found in the cytoplasm. The enzyme catalyses tRNA(Cys) + L-cysteine + ATP = L-cysteinyl-tRNA(Cys) + AMP + diphosphate. The chain is Cysteine--tRNA ligase from Caldanaerobacter subterraneus subsp. tengcongensis (strain DSM 15242 / JCM 11007 / NBRC 100824 / MB4) (Thermoanaerobacter tengcongensis).